We begin with the raw amino-acid sequence, 368 residues long: Aminomethyltransferase (368 aa).

Belongs to the GcvT family. In terms of assembly, the glycine cleavage system is composed of four proteins: P, T, L and H.

The catalysed reaction is N(6)-[(R)-S(8)-aminomethyldihydrolipoyl]-L-lysyl-[protein] + (6S)-5,6,7,8-tetrahydrofolate = N(6)-[(R)-dihydrolipoyl]-L-lysyl-[protein] + (6R)-5,10-methylene-5,6,7,8-tetrahydrofolate + NH4(+). Functionally, the glycine cleavage system catalyzes the degradation of glycine. The sequence is that of Aminomethyltransferase from Alkaliphilus oremlandii (strain OhILAs) (Clostridium oremlandii (strain OhILAs)).